The following is a 37-amino-acid chain: MKTRPSVKPICERCKVIKRRGKVMVICSNPKHKQKQG.

It belongs to the bacterial ribosomal protein bL36 family.

The polypeptide is Large ribosomal subunit protein bL36 (Natranaerobius thermophilus (strain ATCC BAA-1301 / DSM 18059 / JW/NM-WN-LF)).